The primary structure comprises 306 residues: Protoheme IX farnesyltransferase (306 aa).

A run of 8 helical transmembrane segments spans residues 31–50, 55–77, 104–124, 125–145, 168–188, 218–235, 238–258, and 286–306; these read VIELLLVTTAPVMILAQGGW, LILGVLVGGTLSAGSANAFNCYI, LVFAWIIGVASIVWLGVISNW, LAAALSLAAILFYVFVYTLWL, WAAVTGDISWAPVILFMIVFL, GRAAVGLQTILYAWATLA, LLLIPVAGMGLVYTLAALAGG, and ASISYLSLLFLAVGIDPLLPF.

Belongs to the UbiA prenyltransferase family. Protoheme IX farnesyltransferase subfamily.

It is found in the cell membrane. It catalyses the reaction heme b + (2E,6E)-farnesyl diphosphate + H2O = Fe(II)-heme o + diphosphate. It participates in porphyrin-containing compound metabolism; heme O biosynthesis; heme O from protoheme: step 1/1. In terms of biological role, converts heme B (protoheme IX) to heme O by substitution of the vinyl group on carbon 2 of heme B porphyrin ring with a hydroxyethyl farnesyl side group. In Clavibacter michiganensis subsp. michiganensis (strain NCPPB 382), this protein is Protoheme IX farnesyltransferase.